Here is a 461-residue protein sequence, read N- to C-terminus: ADP-specific phosphofructokinase (461 aa).

Residues 1 to 457 form the ADPK domain; it reads MVRELLEKAR…FASYLAMLKE (457 aa). Residues E268, E298, and D441 each contribute to the Mg(2+) site. D441 serves as the catalytic Proton acceptor.

The protein belongs to the carbohydrate kinase PfkC family. Requires Mg(2+) as cofactor.

It is found in the cytoplasm. It carries out the reaction beta-D-fructose 6-phosphate + ADP = beta-D-fructose 1,6-bisphosphate + AMP + H(+). The protein operates within carbohydrate degradation; glycolysis. Functionally, catalyzes the phosphorylation of fructose 6-phosphate to fructose 1,6-bisphosphate using ADP as the phosphate donor. The sequence is that of ADP-specific phosphofructokinase from Thermococcus zilligii.